Reading from the N-terminus, the 445-residue chain is Response regulator protein PilR (445 aa).

Positions 5 to 119 constitute a Response regulatory domain; it reads KALIVDDEPD…RLRELVATAL (115 aa). Asp-11 and Asp-54 each carry 4-aspartylphosphate. The Sigma-54 factor interaction domain occupies 135-364; sequence LLGESPPMRA…LENMLERAYT (230 aa). Residues 163–170 and 226–235 each bind ATP; these read GESGSGKE and ASGGTLFLDE. The segment at residues 418–437 is a DNA-binding region (H-T-H motif); sequence RWNRTAAAQRLGLTFRSMRY.

Post-translationally, phosphorylated by PilS.

It is found in the cytoplasm. In terms of biological role, member of the two-component regulatory system PilS/PilR that regulates the expression of multiple genes including the type IV pilus (T4P) major subunit PilA. Thereby, plays a major role in the regulation of multiple motility pathways. Upon appropriate environmental signals, the histidine kinase PilS transfers the phosphoryl group onto PilR. In turn, PilR functions as a transcriptional activator by direct binding to a cis-acting sequence upstream of the pilin gene promoter leading to its activation. The polypeptide is Response regulator protein PilR (pilR) (Pseudomonas aeruginosa (strain ATCC 15692 / DSM 22644 / CIP 104116 / JCM 14847 / LMG 12228 / 1C / PRS 101 / PAO1)).